The following is a 126-amino-acid chain: Copper resistance protein C (126 aa).

The signal sequence occupies residues 1 to 24 (MLLNRTSFVTLFAAGMLVSALAQA). H25 serves as a coordination point for Cu(2+). Residues M64, M67, M70, H72, and M75 each contribute to the Cu(+) site. H115 contacts Cu(2+).

The protein belongs to the CopC family. In terms of assembly, monomer.

The protein resides in the periplasm. The redox state of copper bound to CopC may act as a switch between the possible trafficking pathways of the metal ion. Its function is as follows. Copper-binding protein involved in copper resistance and homeostasis. Probably mediates copper resistance by sequestering the excess of copper in the periplasm. May act as a copper carrier in the oxidizing periplasmic space that exchanges either Cu(I) or Cu(II) with its putative partners CopA, CopB and CopD. This Pseudomonas syringae pv. tomato protein is Copper resistance protein C.